The chain runs to 1209 residues: Pre-mRNA-splicing factor rse1 (1209 aa).

This sequence belongs to the RSE1 family. Associated with the spliceosome.

It is found in the nucleus. Its function is as follows. Involved in pre-mRNA splicing and cell cycle control. The polypeptide is Pre-mRNA-splicing factor rse1 (msp-5) (Neurospora crassa (strain ATCC 24698 / 74-OR23-1A / CBS 708.71 / DSM 1257 / FGSC 987)).